The following is a 215-amino-acid chain: UPF0502 protein YceH (215 aa).

N6-acetyllysine is present on lysine 80.

The protein belongs to the UPF0502 family.

This is UPF0502 protein YceH from Escherichia fergusonii (strain ATCC 35469 / DSM 13698 / CCUG 18766 / IAM 14443 / JCM 21226 / LMG 7866 / NBRC 102419 / NCTC 12128 / CDC 0568-73).